The primary structure comprises 167 residues: Secretion monitor (167 aa).

An N-terminal signal peptide occupies residues 1–36 (MIGILNRWRQFGRRYFWPHLLLGMVAASFGLPQASA).

It belongs to the SecM family.

The protein resides in the cytoplasm. It is found in the cytosol. It localises to the periplasm. Functionally, regulates secA expression by translational coupling of the secM secA operon. Translational pausing at a specific Pro residue 5 residues before the end of the protein may allow disruption of a mRNA repressor helix that normally suppresses secA translation initiation. In Erwinia tasmaniensis (strain DSM 17950 / CFBP 7177 / CIP 109463 / NCPPB 4357 / Et1/99), this protein is Secretion monitor.